Here is a 260-residue protein sequence, read N- to C-terminus: MARTIDLNADLGESFGPWRMGQDETLLELVTSANIACGFHAGDPDVMAETVRLAVSRGVALGAHPSLPDRQGFGRRPMALRPDEIRNLVLYQIGALAGFARAAGGRLVHVKPHGALYGQAASDAAMAEAIAAAVRAFDANLILVGPAGSQLVRAGQAAGLAIAREGFADRRYEPDGTLTPRGRPEALIEEPAEAVAQALGMVERGEVTARDGTVIPMPVDTLCLHGDGPDAAAFARRLRMELAARGIPVAALGGWLSGAA.

The protein belongs to the LamB/PxpA family. As to quaternary structure, forms a complex composed of PxpA, PxpB and PxpC.

It carries out the reaction 5-oxo-L-proline + ATP + 2 H2O = L-glutamate + ADP + phosphate + H(+). In terms of biological role, catalyzes the cleavage of 5-oxoproline to form L-glutamate coupled to the hydrolysis of ATP to ADP and inorganic phosphate. This chain is 5-oxoprolinase subunit A, found in Methylococcus capsulatus (strain ATCC 33009 / NCIMB 11132 / Bath).